The following is a 318-amino-acid chain: 2,4-dinitroanisole O-demethylase subunit beta (318 aa).

The protein belongs to the metallo-beta-lactamase superfamily. As to quaternary structure, part of the complex DnhAB composed of the 2,4-dinitroanisole O-demethylase alpha (DnhA) and beta (DnhB) subunits.

It catalyses the reaction 2,4-dinitroanisole + H2O = 2,4-dinitrophenol + methanol + H(+). In terms of biological role, involved in the degradation of 2,4-dinitroanisole (DNAN), an insensitive munition ingredient used in explosive formulations as a replacement for 2,4,6-trinitrotoluene (TNT). Catalyzes the removal of the methyl group from 2,4-dinitroanisole (DNAN) to yield 2,4-dinitrophenol (2,4-DNP) and methanol. In Nocardioides sp. (strain JS1661), this protein is 2,4-dinitroanisole O-demethylase subunit beta.